Here is a 95-residue protein sequence, read N- to C-terminus: DNA-directed RNA polymerase subunit Rpo11 (95 aa).

This sequence belongs to the archaeal Rpo11/eukaryotic RPB11/RPC19 RNA polymerase subunit family. In terms of assembly, part of the RNA polymerase complex.

It localises to the cytoplasm. It carries out the reaction RNA(n) + a ribonucleoside 5'-triphosphate = RNA(n+1) + diphosphate. Its function is as follows. DNA-dependent RNA polymerase (RNAP) catalyzes the transcription of DNA into RNA using the four ribonucleoside triphosphates as substrates. The polypeptide is DNA-directed RNA polymerase subunit Rpo11 (Thermococcus sibiricus (strain DSM 12597 / MM 739)).